Here is an 82-residue protein sequence, read N- to C-terminus: Putative membrane protein insertion efficiency factor (82 aa).

The protein belongs to the UPF0161 family.

The protein localises to the cell inner membrane. In terms of biological role, could be involved in insertion of integral membrane proteins into the membrane. The polypeptide is Putative membrane protein insertion efficiency factor (Rickettsia rickettsii (strain Iowa)).